The chain runs to 241 residues: Orotidine 5'-phosphate decarboxylase (241 aa).

Substrate-binding positions include D15, K36, 63–72, T127, R189, Q198, G218, and R219; that span reads DLKFHDIPNT. Catalysis depends on K65, which acts as the Proton donor.

Belongs to the OMP decarboxylase family. Type 1 subfamily. As to quaternary structure, homodimer.

It carries out the reaction orotidine 5'-phosphate + H(+) = UMP + CO2. It functions in the pathway pyrimidine metabolism; UMP biosynthesis via de novo pathway; UMP from orotate: step 2/2. Its function is as follows. Catalyzes the decarboxylation of orotidine 5'-monophosphate (OMP) to uridine 5'-monophosphate (UMP). The chain is Orotidine 5'-phosphate decarboxylase from Prochlorococcus marinus (strain MIT 9211).